The sequence spans 287 residues: 4-diphosphocytidyl-2-C-methyl-D-erythritol kinase (287 aa).

Lys-10 is a catalytic residue. ATP is bound at residue 94–104; sequence PVAAGLGGGSA. Asp-136 is an active-site residue.

It belongs to the GHMP kinase family. IspE subfamily.

The catalysed reaction is 4-CDP-2-C-methyl-D-erythritol + ATP = 4-CDP-2-C-methyl-D-erythritol 2-phosphate + ADP + H(+). It participates in isoprenoid biosynthesis; isopentenyl diphosphate biosynthesis via DXP pathway; isopentenyl diphosphate from 1-deoxy-D-xylulose 5-phosphate: step 3/6. Functionally, catalyzes the phosphorylation of the position 2 hydroxy group of 4-diphosphocytidyl-2C-methyl-D-erythritol. In Pelotomaculum thermopropionicum (strain DSM 13744 / JCM 10971 / SI), this protein is 4-diphosphocytidyl-2-C-methyl-D-erythritol kinase.